The sequence spans 670 residues: Lebercilin-like protein (670 aa).

The segment at 24–44 (RRSAECKRSPGTGDFSRNSNA) is disordered. 2 coiled-coil regions span residues 148–259 (LHKI…EREE) and 305–336 (AAQT…IKNI). A disordered region spans residues 351–402 (YPKVSSTKSVQADRKSLPFTSMRHQGTQKSDVAPLTTKGKKATGNMDRKEKS). A compositionally biased stretch (polar residues) spans 368 to 380 (PFTSMRHQGTQKS). Residues 420–440 (EDSKTKYEDLSREEKHLEVQV) are a coiled coil. 3 disordered regions span residues 495–520 (RSMQ…PLRQ), 533–594 (LHHG…FRDK), and 606–647 (GYVL…AFGD). Positions 546 to 558 (AGNTKYSHSTSKH) are enriched in polar residues. Basic and acidic residues-rich tracts occupy residues 560-572 (SNRE…HSDS), 585-594 (KAKDTTFRDK), and 621-632 (GSEEPLQSKESH). A compositionally biased stretch (polar residues) spans 637-647 (SQASASNAFGD).

The protein belongs to the LCA5 family.

This is Lebercilin-like protein from Papio anubis (Olive baboon).